The sequence spans 279 residues: Esterase CG5412 (279 aa).

Residues Ser-133, Asp-191, and His-218 each act as charge relay system in the active site. A disordered region spans residues 249–279 (QSGNASFVDSGAEDDNDAEVAAMTAELDESD).

It belongs to the LovG family.

In Drosophila melanogaster (Fruit fly), this protein is Esterase CG5412.